Reading from the N-terminus, the 222-residue chain is Superoxide dismutase [Cu-Zn], chloroplastic (222 aa).

The N-terminal 68 residues, 1 to 68 (MAAHTILASA…AASKPLTIVA (68 aa)), are a transit peptide targeting the chloroplast. Cu cation contacts are provided by His114, His116, and His131. A disulfide bridge links Cys125 with Cys214. Positions 131, 139, 148, and 151 each coordinate Zn(2+). His188 contributes to the Cu cation binding site.

Belongs to the Cu-Zn superoxide dismutase family. As to quaternary structure, homotetramer. Requires Cu cation as cofactor. The cofactor is Zn(2+).

It localises to the plastid. The protein resides in the chloroplast. It catalyses the reaction 2 superoxide + 2 H(+) = H2O2 + O2. In terms of biological role, destroys radicals which are normally produced within the cells and which are toxic to biological systems. This is Superoxide dismutase [Cu-Zn], chloroplastic (SODCP) from Spinacia oleracea (Spinach).